A 285-amino-acid chain; its full sequence is Nucleotide-binding protein Cphy_0331 (285 aa).

8-15 (GMSGAGKS) is an ATP binding site. 59–62 (DIRS) contacts GTP.

Belongs to the RapZ-like family.

Functionally, displays ATPase and GTPase activities. This is Nucleotide-binding protein Cphy_0331 from Lachnoclostridium phytofermentans (strain ATCC 700394 / DSM 18823 / ISDg) (Clostridium phytofermentans).